A 425-amino-acid polypeptide reads, in one-letter code: Protein let-756 (425 aa).

Disordered stretches follow at residues 277–298 (LEEK…LRKE) and 314–425 (EEEL…QRYP). Over residues 281 to 291 (KRRREKKKRRR) the composition is skewed to basic residues. The span at 329 to 340 (ASTQTRYNRPQN) shows a compositional bias: polar residues. Positions 378-389 (HNSHHHHHHHPR) are enriched in basic residues. The segment covering 395 to 425 (DPQQRHQSQQHYLAQTVSNPNRQNVNYQRYP) has biased composition (polar residues).

The protein belongs to the heparin-binding growth factors family. In terms of assembly, interacts with pal-1. As to expression, expressed in pharynx, CAN neuron and body wall muscles.

Its subcellular location is the nucleus. The protein resides in the membrane. Its function is as follows. Required for larval development. Probably by binding receptor egl-15, negatively regulates membrane protrusion from body wall muscles during larval development. The protein is Protein let-756 (let-756) of Caenorhabditis elegans.